Consider the following 312-residue polypeptide: DNA-directed RNA polymerase subunit alpha (312 aa).

Residues 1–226 (MIEFEKPNIT…EHFKVFMSTD (226 aa)) form an alpha N-terminal domain (alpha-NTD) region. Residues 243–312 (NEKKLEMTIE…DLGLSLRQDD (70 aa)) are alpha C-terminal domain (alpha-CTD).

It belongs to the RNA polymerase alpha chain family. In terms of assembly, homodimer. The RNAP catalytic core consists of 2 alpha, 1 beta, 1 beta' and 1 omega subunit. When a sigma factor is associated with the core the holoenzyme is formed, which can initiate transcription.

The enzyme catalyses RNA(n) + a ribonucleoside 5'-triphosphate = RNA(n+1) + diphosphate. DNA-dependent RNA polymerase catalyzes the transcription of DNA into RNA using the four ribonucleoside triphosphates as substrates. The polypeptide is DNA-directed RNA polymerase subunit alpha (Lactobacillus johnsonii (strain CNCM I-12250 / La1 / NCC 533)).